Here is a 924-residue protein sequence, read N- to C-terminus: Periplasmic nitrate reductase (924 aa).

Residues 1 to 30 constitute a signal peptide (tat-type signal); sequence MNRRDFIKNTAIASAASVAGLSVPSSMLGA. The 57-residue stretch at 35–91 folds into the 4Fe-4S Mo/W bis-MGD-type domain; the sequence is WKWDKAVCRFCGTGCGIMIARKDGKIVATKGDPAAPVNRGLNCIKGYFNAKIMYGED. [4Fe-4S] cluster is bound by residues Cys42, Cys45, Cys49, and Cys77. Mo-bis(molybdopterin guanine dinucleotide)-binding positions include Lys79, Gln147, Asn172, Cys176, 209-216, Met417, Gln421, Asn527, 552-553, Lys575, Asp602, and 814-823; these read WGANMAEM, SD, and TGRVLEHWHS. A substrate-binding site is contributed by Trp890. Mo-bis(molybdopterin guanine dinucleotide) is bound by residues Asn898 and Lys915.

The protein belongs to the prokaryotic molybdopterin-containing oxidoreductase family. NasA/NapA/NarB subfamily. In terms of assembly, component of the periplasmic nitrate reductase NapAB complex composed of NapA and NapB. [4Fe-4S] cluster is required as a cofactor. Requires Mo-bis(molybdopterin guanine dinucleotide) as cofactor. Post-translationally, predicted to be exported by the Tat system. The position of the signal peptide cleavage has not been experimentally proven.

Its subcellular location is the periplasm. It carries out the reaction 2 Fe(II)-[cytochrome] + nitrate + 2 H(+) = 2 Fe(III)-[cytochrome] + nitrite + H2O. Functionally, catalytic subunit of the periplasmic nitrate reductase complex NapAB. Receives electrons from NapB and catalyzes the reduction of nitrate to nitrite. The polypeptide is Periplasmic nitrate reductase (Campylobacter jejuni subsp. jejuni serotype O:6 (strain 81116 / NCTC 11828)).